A 115-amino-acid polypeptide reads, in one-letter code: Hydrogenase maturation factor HypA (115 aa).

His-2 contacts Ni(2+). Zn(2+) is bound by residues Cys-73, Cys-76, Cys-89, and Cys-92.

The protein belongs to the HypA/HybF family.

Its function is as follows. Involved in the maturation of [NiFe] hydrogenases. Required for nickel insertion into the metal center of the hydrogenase. The chain is Hydrogenase maturation factor HypA from Parabacteroides distasonis (strain ATCC 8503 / DSM 20701 / CIP 104284 / JCM 5825 / NCTC 11152).